The following is a 376-amino-acid chain: DNA replication and repair protein RecF (376 aa).

ATP is bound at residue 30 to 37 (GNNAQGKS).

Belongs to the RecF family.

The protein localises to the cytoplasm. The RecF protein is involved in DNA metabolism; it is required for DNA replication and normal SOS inducibility. RecF binds preferentially to single-stranded, linear DNA. It also seems to bind ATP. This chain is DNA replication and repair protein RecF, found in Trichormus variabilis (strain ATCC 29413 / PCC 7937) (Anabaena variabilis).